Here is a 328-residue protein sequence, read N- to C-terminus: Protoheme IX farnesyltransferase (328 aa).

Transmembrane regions (helical) follow at residues 31–51 (IILL…KGEV), 53–73 (LFLL…ANAI), 120–140 (VFAN…YVGV), 153–173 (IVIG…AVTG), 181–201 (LLFA…AIYI), 226–246 (IWVY…PLHV), 250–270 (IYAV…WQLL), and 285–305 (YSIY…LPFT).

The protein belongs to the UbiA prenyltransferase family. Protoheme IX farnesyltransferase subfamily.

The protein resides in the cell inner membrane. The enzyme catalyses heme b + (2E,6E)-farnesyl diphosphate + H2O = Fe(II)-heme o + diphosphate. It participates in porphyrin-containing compound metabolism; heme O biosynthesis; heme O from protoheme: step 1/1. Functionally, converts heme B (protoheme IX) to heme O by substitution of the vinyl group on carbon 2 of heme B porphyrin ring with a hydroxyethyl farnesyl side group. This Trichodesmium erythraeum (strain IMS101) protein is Protoheme IX farnesyltransferase.